Here is a 411-residue protein sequence, read N- to C-terminus: Serine/threonine transporter SstT (411 aa).

8 consecutive transmembrane segments (helical) span residues 17–37, 41–61, 79–99, 138–158, 189–209, 214–234, 295–315, and 327–347; these read IMVG…TASA, LGAL…LVLV, ILFL…VVSF, ALIS…GLAL, LGIF…ALWG, LVVL…LIVF, MAGA…TLGI, and VVAA…LLLI.

It belongs to the dicarboxylate/amino acid:cation symporter (DAACS) (TC 2.A.23) family.

Its subcellular location is the cell inner membrane. It carries out the reaction L-serine(in) + Na(+)(in) = L-serine(out) + Na(+)(out). It catalyses the reaction L-threonine(in) + Na(+)(in) = L-threonine(out) + Na(+)(out). Functionally, involved in the import of serine and threonine into the cell, with the concomitant import of sodium (symport system). The sequence is that of Serine/threonine transporter SstT from Serratia proteamaculans (strain 568).